The sequence spans 272 residues: MICOS complex subunit MIC27 (272 aa).

Residues 1–24 constitute a mitochondrion transit peptide; that stretch reads MAAKVARLAAAASSLPFVCAVYAE. Residues 28–107 are Mitochondrial intermembrane-facing; that stretch reads SKSQLVKPKQ…YVYLKNPPPD (80 aa). A helical transmembrane segment spans residues 108-126; that stretch reads FLPRVGIITISGLAGVVLA. Residues 127 to 134 lie on the Mitochondrial matrix side of the membrane; that stretch reads RKDSRFKK. A helical membrane pass occupies residues 135-152; it reads IAYPLGLTTLGISVCYPA. Topologically, residues 153-272 are mitochondrial intermembrane; the sequence is QAVVIAKITG…EDVDMYSTRS (120 aa). Residues 187–272 are disordered; the sequence is SKLQQESKSV…EDVDMYSTRS (86 aa). 2 stretches are compositionally biased toward polar residues: residues 188–198 and 206–245; these read KLQQESKSVTQ and ISNV…TVKT.

Belongs to the apolipoprotein O/MICOS complex subunit Mic27 family. As to quaternary structure, component of the mitochondrial contact site and cristae organizing system (MICOS) complex (also known as MINOS or MitOS complex).

The protein resides in the mitochondrion inner membrane. Functionally, component of the MICOS complex, a large protein complex of the mitochondrial inner membrane that plays crucial roles in the maintenance of crista junctions, inner membrane architecture, and formation of contact sites to the outer membrane. This chain is MICOS complex subunit MIC27 (APOOL), found in Gallus gallus (Chicken).